A 379-amino-acid polypeptide reads, in one-letter code: Cytochrome b (379 aa).

The next 4 membrane-spanning stretches (helical) occupy residues 33–53 (FGSL…FLAM), 77–98 (WLIR…YLHI), 113–133 (WNIG…GYVL), and 178–198 (FFAF…VHLL). The heme b site is built by H83 and H97. Heme b is bound by residues H182 and H196. A ubiquinone is bound at residue H201. Helical transmembrane passes span 226–246 (TKDF…VLFF), 288–308 (MGGV…PHIQ), 320–340 (ISQF…WIGG), and 347–367 (FIII…AFLP).

This sequence belongs to the cytochrome b family. As to quaternary structure, the cytochrome bc1 complex contains 11 subunits: 3 respiratory subunits (MT-CYB, CYC1 and UQCRFS1), 2 core proteins (UQCRC1 and UQCRC2) and 6 low-molecular weight proteins (UQCRH/QCR6, UQCRB/QCR7, UQCRQ/QCR8, UQCR10/QCR9, UQCR11/QCR10 and a cleavage product of UQCRFS1). This cytochrome bc1 complex then forms a dimer. Requires heme b as cofactor.

It is found in the mitochondrion inner membrane. Functionally, component of the ubiquinol-cytochrome c reductase complex (complex III or cytochrome b-c1 complex) that is part of the mitochondrial respiratory chain. The b-c1 complex mediates electron transfer from ubiquinol to cytochrome c. Contributes to the generation of a proton gradient across the mitochondrial membrane that is then used for ATP synthesis. This is Cytochrome b (MT-CYB) from Dipodomys ordii (Ord's kangaroo rat).